A 63-amino-acid polypeptide reads, in one-letter code: Beta-defensin 4 (63 aa).

The N-terminal stretch at 1–22 (MRIHYLLFSFLLVLLSPLSAFT) is a signal peptide. Glutamine 23 is subject to Pyrrolidone carboxylic acid. Cystine bridges form between cysteine 31/cysteine 59, cysteine 38/cysteine 52, and cysteine 42/cysteine 60.

The protein belongs to the beta-defensin family. Highly expressed in lung.

The protein resides in the secreted. Functionally, exhibits antimicrobial activity against Gram-negative bacteria and Gram-positive bacteria. May act as a ligand for C-C chemokine receptor CCR6. Binds to CCR6 and induces chemotactic activity of CCR6-expressing cells. The protein is Beta-defensin 4 (Defb4) of Rattus norvegicus (Rat).